The chain runs to 349 residues: Probable ethanolamine kinase (349 aa).

Belongs to the choline/ethanolamine kinase family.

It is found in the cytoplasm. The enzyme catalyses ethanolamine + ATP = phosphoethanolamine + ADP + H(+). The protein operates within phospholipid metabolism; phosphatidylethanolamine biosynthesis; phosphatidylethanolamine from ethanolamine: step 1/3. In terms of biological role, highly specific for ethanolamine phosphorylation. May be a rate-controlling step in phosphatidylethanolamine biosynthesis. The sequence is that of Probable ethanolamine kinase (etnk) from Nematostella vectensis (Starlet sea anemone).